Consider the following 141-residue polypeptide: Transmembrane protein 216 (141 aa).

4 helical membrane-spanning segments follow: residues 15 to 35 (ILFF…LLIF), 49 to 69 (LVLD…RLFF), 82 to 102 (LGIS…YLLL), and 115 to 135 (SILL…LATF).

As to quaternary structure, part of the tectonic-like complex (also named B9 complex). Interacts with TMEM107.

It localises to the membrane. It is found in the cytoplasm. Its subcellular location is the cytoskeleton. The protein localises to the cilium basal body. In terms of biological role, part of the tectonic-like complex which is required for tissue-specific ciliogenesis and may regulate ciliary membrane composition. This is Transmembrane protein 216 (Tmem216) from Rattus norvegicus (Rat).